Consider the following 241-residue polypeptide: Microneme antigen (241 aa).

The first 34 residues, 1-34 (MRLPIRFPKYVLYGMASAVWSILFLHILVGDTMS), serve as a signal peptide directing secretion. Residues 35 to 103 (AADALSWSGG…ATGRGPSFVH (69 aa)) constitute a propeptide that is removed on maturation. The span at 61–83 (HEMGKELEQQHGAEEQQMQRDTK) shows a compositional bias: basic and acidic residues. Positions 61-92 (HEMGKELEQQHGAEEQQMQRDTKPAAFSNPPH) are disordered. PAN domains follow at residues 112-181 (CFPH…PRSC) and 185-241 (CTDN…FNKS). 6 cysteine pairs are disulfide-bonded: Cys-112–Cys-181, Cys-137–Cys-159, Cys-141–Cys-147, Cys-185–Cys-189, Cys-210–Cys-230, and Cys-214–Cys-220. A carbohydrate is bound at residue Ser-121. A carbohydrate contacts are provided by Lys-162, Tyr-169, and Asp-174.

It belongs to the microneme antigen family. As to quaternary structure, homodimer or heterodimer of major microneme antigen and microneme antigen. Contains six disulfide bonds.

It is found in the cytoplasmic vesicle. Its subcellular location is the secretory vesicle. It localises to the microneme. In terms of biological role, galactose-binding lectin. Plays a role in adhesion to the host cell. Has a potential role in invasion of host cells. This is Microneme antigen from Sarcocystis muris.